A 62-amino-acid chain; its full sequence is UPF0434 protein RHECIAT_CH0004260 (62 aa).

The protein belongs to the UPF0434 family.

This is UPF0434 protein RHECIAT_CH0004260 from Rhizobium etli (strain CIAT 652).